Consider the following 77-residue polypeptide: Bradykinin-potentiating peptide (77 aa).

Residues 1 to 22 (MNKKTLLVIFIVTLLIADEVNS) form the signal peptide. Residues 74-77 (RRRR) constitute a propeptide that is removed on maturation.

This sequence belongs to the non-disulfide-bridged peptide (NDBP) superfamily. Long chain multifunctional peptide (group 2) family. As to expression, expressed by the venom gland.

It localises to the secreted. Antimicrobial peptide. May also inhibit angiotensin-converting enzyme (ACE) and potentiate bradykinin (BK). The polypeptide is Bradykinin-potentiating peptide (Tityus discrepans (Venezuelan scorpion)).